The primary structure comprises 151 residues: UPF0178 protein PMI1258 (151 aa).

This sequence belongs to the UPF0178 family.

The chain is UPF0178 protein PMI1258 from Proteus mirabilis (strain HI4320).